We begin with the raw amino-acid sequence, 645 residues long: 1-deoxy-D-xylulose-5-phosphate synthase 2 (645 aa).

Residues H79 and 120-122 (GHS) each bind thiamine diphosphate. Residue D151 participates in Mg(2+) binding. Residues 152–153 (GS), N180, Y291, and E373 each bind thiamine diphosphate. N180 is a binding site for Mg(2+).

The protein belongs to the transketolase family. DXPS subfamily. In terms of assembly, homodimer. Requires Mg(2+) as cofactor. It depends on thiamine diphosphate as a cofactor.

It carries out the reaction D-glyceraldehyde 3-phosphate + pyruvate + H(+) = 1-deoxy-D-xylulose 5-phosphate + CO2. It participates in metabolic intermediate biosynthesis; 1-deoxy-D-xylulose 5-phosphate biosynthesis; 1-deoxy-D-xylulose 5-phosphate from D-glyceraldehyde 3-phosphate and pyruvate: step 1/1. Functionally, catalyzes the acyloin condensation reaction between C atoms 2 and 3 of pyruvate and glyceraldehyde 3-phosphate to yield 1-deoxy-D-xylulose-5-phosphate (DXP). The sequence is that of 1-deoxy-D-xylulose-5-phosphate synthase 2 from Rhodospirillum rubrum (strain ATCC 11170 / ATH 1.1.1 / DSM 467 / LMG 4362 / NCIMB 8255 / S1).